Here is a 510-residue protein sequence, read N- to C-terminus: Gelatinase (510 aa).

The signal sequence occupies residues 1–30; it reads MMKGNKILYILGTGIFVGSSCLFSSLFVAA. Positions 31-192 are excised as a propeptide; it reads EEQVYSESEV…IMEKQDLTEH (162 aa). Asp-324 is a binding site for Ca(2+). His-328 is a binding site for Zn(2+). Glu-329 is a catalytic residue. Zn(2+) is bound by residues His-332 and Glu-352. Ser-376 lines the Ca(2+) pocket. The Proton donor role is filled by His-419.

The protein belongs to the peptidase M4 family.

It is found in the secreted. It carries out the reaction Preferential cleavage: Xaa-|-Leu, Xaa-|-Phe, Xaa-|-Tyr, Xaa-|-Ala.. Its activity is regulated as follows. Inhibited by L-leucine hydroxamate and phosphoramidon. Not inhibited by phenylmethanesulfonyl fluoride. Reversibly inactivated by straight-chain aliphatic alcohols. Metalloprotease capable of the hydrolysis of insoluble hydrophobic substrates. Hydrolyzes azocoll and gelatin and, at a lower rate, soluble and insoluble collagens. Does not cleave short synthetic peptides. Preferentially hydrolyzes the 24-Phe-|-Phe-25 bond in the insulin B-chain, followed by the 5-His-|-Leu-6 bond. Inactivates endothelin-1, primarily by cleavage of the 5-Ser-|-Leu-6 and 16-His-|-Leu-17 bonds. Hydrolyzes the alpha chain of C3 to generate a C3b-like protein. Inhibits complement-mediated hemolysis and opsinization of bacteria. Hydrolyzes the insect antimicrobial peptide cecropin. Decreases the length of E.faecalis chains via the activation of autolysin. Degrades polymerized fibrin. The protein is Gelatinase of Enterococcus faecalis (strain ATCC 700802 / V583).